The chain runs to 119 residues: ATP-dependent Clp protease adapter protein ClpS (119 aa).

Belongs to the ClpS family. In terms of assembly, binds to the N-terminal domain of the chaperone ClpA.

Its function is as follows. Involved in the modulation of the specificity of the ClpAP-mediated ATP-dependent protein degradation. This chain is ATP-dependent Clp protease adapter protein ClpS, found in Marinobacter nauticus (strain ATCC 700491 / DSM 11845 / VT8) (Marinobacter aquaeolei).